We begin with the raw amino-acid sequence, 158 residues long: 6,7-dimethyl-8-ribityllumazine synthase (158 aa).

5-amino-6-(D-ribitylamino)uracil is bound by residues W27, 58-60, and 81-83; these read SFE and VII. 86 to 87 contacts (2S)-2-hydroxy-3-oxobutyl phosphate; that stretch reads GT. The Proton donor role is filled by H89. Residue F114 coordinates 5-amino-6-(D-ribitylamino)uracil. (2S)-2-hydroxy-3-oxobutyl phosphate is bound at residue R128.

Belongs to the DMRL synthase family.

The enzyme catalyses (2S)-2-hydroxy-3-oxobutyl phosphate + 5-amino-6-(D-ribitylamino)uracil = 6,7-dimethyl-8-(1-D-ribityl)lumazine + phosphate + 2 H2O + H(+). It participates in cofactor biosynthesis; riboflavin biosynthesis; riboflavin from 2-hydroxy-3-oxobutyl phosphate and 5-amino-6-(D-ribitylamino)uracil: step 1/2. In terms of biological role, catalyzes the formation of 6,7-dimethyl-8-ribityllumazine by condensation of 5-amino-6-(D-ribitylamino)uracil with 3,4-dihydroxy-2-butanone 4-phosphate. This is the penultimate step in the biosynthesis of riboflavin. This is 6,7-dimethyl-8-ribityllumazine synthase from Leifsonia xyli subsp. xyli (strain CTCB07).